Here is a 1256-residue protein sequence, read N- to C-terminus: SNF2 domain-containing protein CLASSY 1 (1256 aa).

Disordered regions lie at residues 269–290 (ELRR…EIQP) and 448–467 (GNVV…VSRE). A compositionally biased stretch (basic and acidic residues) spans 278 to 290 (GRPERYGDSEIQP). Over residues 451-463 (VHKRNGPHSRIRS) the composition is skewed to basic residues. The Helicase ATP-binding domain occupies 699–898 (DPSSDKIGGC…FNTLCLARPK (200 aa)). 712-719 (HTPGAGKT) contributes to the ATP binding site. The short motif at 849–852 (DEGH) is the DEAH box element. A Helicase C-terminal domain is found at 1061–1222 (FVLNLVFRVV…EFVEDPSQWQ (162 aa)).

It belongs to the helicase family. As to quaternary structure, interacts with NRPD1, NRPD3 and SHH1.

The protein resides in the nucleus. The protein localises to the nucleoplasm. It localises to the nucleolus. Its function is as follows. Probable chromatin remodeling factor. Required for the initial establishment of DNA methylation and for accumulation of 24-nt siRNAs. May act on RNA templates by remodeling ribonucleoprotein structures and thereby influencing the availability of the RNA to polymerases. The polypeptide is SNF2 domain-containing protein CLASSY 1 (CLSY1) (Arabidopsis thaliana (Mouse-ear cress)).